Consider the following 126-residue polypeptide: uncharacterized protein (126 aa).

An N-terminal signal peptide occupies residues 1 to 23; sequence MLKKLIMGFFLLILLGIAGVAVM.

This is an uncharacterized protein from Archaeoglobus fulgidus (strain ATCC 49558 / DSM 4304 / JCM 9628 / NBRC 100126 / VC-16).